A 311-amino-acid polypeptide reads, in one-letter code: Methionyl-tRNA formyltransferase (311 aa).

110 to 113 contributes to the (6S)-5,6,7,8-tetrahydrofolate binding site; it reads SLLP.

Belongs to the Fmt family.

It carries out the reaction L-methionyl-tRNA(fMet) + (6R)-10-formyltetrahydrofolate = N-formyl-L-methionyl-tRNA(fMet) + (6S)-5,6,7,8-tetrahydrofolate + H(+). Functionally, attaches a formyl group to the free amino group of methionyl-tRNA(fMet). The formyl group appears to play a dual role in the initiator identity of N-formylmethionyl-tRNA by promoting its recognition by IF2 and preventing the misappropriation of this tRNA by the elongation apparatus. The chain is Methionyl-tRNA formyltransferase from Streptococcus pyogenes serotype M12 (strain MGAS2096).